The sequence spans 88 residues: Small cysteine and glycine repeat-containing protein 1 (88 aa).

Residues 4–72 are 10 X 2 AA repeats of CG; it reads CGCGGCGGCG…TCSSCGYSCG (69 aa).

It belongs to the KRTAP type 28 family.

In terms of biological role, in the hair cortex, hair keratin intermediate filaments are embedded in an interfilamentous matrix, consisting of hair keratin-associated proteins (KRTAP), which are essential for the formation of a rigid and resistant hair shaft through their extensive disulfide bond cross-linking with abundant cysteine residues of hair keratins. The matrix proteins include the high-sulfur and high-glycine-tyrosine keratins. The chain is Small cysteine and glycine repeat-containing protein 1 from Homo sapiens (Human).